A 117-amino-acid polypeptide reads, in one-letter code: Small ribosomal subunit protein bS6 (117 aa).

The interval 97-117 (TEEPSAILTKKDDRRGRRERN) is disordered.

It belongs to the bacterial ribosomal protein bS6 family.

Binds together with bS18 to 16S ribosomal RNA. The polypeptide is Small ribosomal subunit protein bS6 (Maricaulis maris (strain MCS10) (Caulobacter maris)).